The sequence spans 47 residues: Protein PsbN (47 aa).

Residues 9–31 (YSLLIAMVTITFGLTGYGLYTAF) traverse the membrane as a helical segment.

It belongs to the PsbN family.

It is found in the cellular thylakoid membrane. May play a role in photosystem I and II biogenesis. This is Protein PsbN from Prochlorococcus marinus (strain MIT 9303).